The primary structure comprises 136 residues: Small ribosomal subunit protein uS11 (136 aa).

2 disordered regions span residues 1 to 20 (MAQR…NVTN) and 115 to 136 (VTPQ…EKAR). Over residues 125 to 136 (PPKRVLKREKAR) the composition is skewed to basic residues.

Belongs to the universal ribosomal protein uS11 family. In terms of assembly, part of the 30S ribosomal subunit. Interacts with proteins S7 and S18. Binds to IF-3.

Functionally, located on the platform of the 30S subunit, it bridges several disparate RNA helices of the 16S rRNA. Forms part of the Shine-Dalgarno cleft in the 70S ribosome. This chain is Small ribosomal subunit protein uS11, found in Mycoplasmopsis pulmonis (strain UAB CTIP) (Mycoplasma pulmonis).